Here is a 122-residue protein sequence, read N- to C-terminus: S-adenosylmethionine decarboxylase proenzyme (122 aa).

Ser-69 functions as the Schiff-base intermediate with substrate; via pyruvic acid in the catalytic mechanism. At Ser-69 the chain carries Pyruvic acid (Ser); by autocatalysis. His-74 (proton acceptor; for processing activity) is an active-site residue. Cys-89 serves as the catalytic Proton donor; for catalytic activity.

It belongs to the prokaryotic AdoMetDC family. Type 1 subfamily. Heterotetramer of two alpha and two beta chains arranged as a dimer of alpha/beta heterodimers. It depends on pyruvate as a cofactor. Is synthesized initially as an inactive proenzyme. Formation of the active enzyme involves a self-maturation process in which the active site pyruvoyl group is generated from an internal serine residue via an autocatalytic post-translational modification. Two non-identical subunits are generated from the proenzyme in this reaction, and the pyruvate is formed at the N-terminus of the alpha chain, which is derived from the carboxyl end of the proenzyme. The post-translation cleavage follows an unusual pathway, termed non-hydrolytic serinolysis, in which the side chain hydroxyl group of the serine supplies its oxygen atom to form the C-terminus of the beta chain, while the remainder of the serine residue undergoes an oxidative deamination to produce ammonia and the pyruvoyl group blocking the N-terminus of the alpha chain.

It catalyses the reaction S-adenosyl-L-methionine + H(+) = S-adenosyl 3-(methylsulfanyl)propylamine + CO2. It participates in amine and polyamine biosynthesis; S-adenosylmethioninamine biosynthesis; S-adenosylmethioninamine from S-adenosyl-L-methionine: step 1/1. In terms of biological role, catalyzes the decarboxylation of S-adenosylmethionine to S-adenosylmethioninamine (dcAdoMet), the propylamine donor required for the synthesis of the polyamines spermine and spermidine from the diamine putrescine. This Saccharolobus islandicus (strain L.S.2.15 / Lassen #1) (Sulfolobus islandicus) protein is S-adenosylmethionine decarboxylase proenzyme.